Here is a 576-residue protein sequence, read N- to C-terminus: Proline--tRNA ligase (576 aa).

Belongs to the class-II aminoacyl-tRNA synthetase family. ProS type 1 subfamily. In terms of assembly, homodimer.

It localises to the cytoplasm. It carries out the reaction tRNA(Pro) + L-proline + ATP = L-prolyl-tRNA(Pro) + AMP + diphosphate. Its function is as follows. Catalyzes the attachment of proline to tRNA(Pro) in a two-step reaction: proline is first activated by ATP to form Pro-AMP and then transferred to the acceptor end of tRNA(Pro). As ProRS can inadvertently accommodate and process non-cognate amino acids such as alanine and cysteine, to avoid such errors it has two additional distinct editing activities against alanine. One activity is designated as 'pretransfer' editing and involves the tRNA(Pro)-independent hydrolysis of activated Ala-AMP. The other activity is designated 'posttransfer' editing and involves deacylation of mischarged Ala-tRNA(Pro). The misacylated Cys-tRNA(Pro) is not edited by ProRS. The polypeptide is Proline--tRNA ligase (Bordetella parapertussis (strain 12822 / ATCC BAA-587 / NCTC 13253)).